Here is a 147-residue protein sequence, read N- to C-terminus: Deoxyuridine 5'-triphosphate nucleotidohydrolase (147 aa).

Residues 67–69, N80, and 84–86 each bind substrate; these read RSG and TID.

The protein belongs to the dUTPase family. Mg(2+) serves as cofactor.

It catalyses the reaction dUTP + H2O = dUMP + diphosphate + H(+). Its pathway is pyrimidine metabolism; dUMP biosynthesis; dUMP from dCTP (dUTP route): step 2/2. In terms of biological role, this enzyme is involved in nucleotide metabolism: it produces dUMP, the immediate precursor of thymidine nucleotides and it decreases the intracellular concentration of dUTP so that uracil cannot be incorporated into DNA. The protein is Deoxyuridine 5'-triphosphate nucleotidohydrolase of Syntrophotalea carbinolica (strain DSM 2380 / NBRC 103641 / GraBd1) (Pelobacter carbinolicus).